The following is a 1331-amino-acid chain: DNA-directed RNA polymerase subunit beta' (1331 aa).

Zn(2+) is bound by residues cysteine 60, cysteine 62, cysteine 75, and cysteine 78. Mg(2+)-binding residues include aspartate 535, aspartate 537, and aspartate 539. Residues cysteine 902, cysteine 979, cysteine 986, and cysteine 989 each contribute to the Zn(2+) site.

The protein belongs to the RNA polymerase beta' chain family. The RNAP catalytic core consists of 2 alpha, 1 beta, 1 beta' and 1 omega subunit. When a sigma factor is associated with the core the holoenzyme is formed, which can initiate transcription. It depends on Mg(2+) as a cofactor. Requires Zn(2+) as cofactor.

It carries out the reaction RNA(n) + a ribonucleoside 5'-triphosphate = RNA(n+1) + diphosphate. Its function is as follows. DNA-dependent RNA polymerase catalyzes the transcription of DNA into RNA using the four ribonucleoside triphosphates as substrates. In Corynebacterium aurimucosum (strain ATCC 700975 / DSM 44827 / CIP 107346 / CN-1) (Corynebacterium nigricans), this protein is DNA-directed RNA polymerase subunit beta'.